Reading from the N-terminus, the 158-residue chain is uncharacterized protein (158 aa).

The HTH hxlR-type domain occupies 13 to 110; sequence ESVGRALELV…WGDEYLPRPE (98 aa).

This is an uncharacterized protein from Mycobacterium tuberculosis (strain CDC 1551 / Oshkosh).